The sequence spans 533 residues: CTP synthase (533 aa).

The tract at residues 1-269 (MKKNLKILVI…HEILSSKLNI (269 aa)) is amidoligase domain. Ser16 contributes to the CTP binding site. Ser16 is a binding site for UTP. Residues 17 to 22 (GIGKGV) and Asp73 each bind ATP. Mg(2+)-binding residues include Asp73 and Glu143. CTP contacts are provided by residues 150–152 (DME), 190–195 (KSKPTQ), and Lys226. UTP-binding positions include 190–195 (KSKPTQ) and Lys226. A Glutamine amidotransferase type-1 domain is found at 304-533 (YAELDDSYAS…LFLGLIKACI (230 aa)). Gly355 contributes to the L-glutamine binding site. Cys382 serves as the catalytic Nucleophile; for glutamine hydrolysis. L-glutamine contacts are provided by residues 383 to 386 (LGLQ), Glu406, and Arg466. Active-site residues include His511 and Glu513.

The protein belongs to the CTP synthase family. As to quaternary structure, homotetramer.

It carries out the reaction UTP + L-glutamine + ATP + H2O = CTP + L-glutamate + ADP + phosphate + 2 H(+). It catalyses the reaction L-glutamine + H2O = L-glutamate + NH4(+). The enzyme catalyses UTP + NH4(+) + ATP = CTP + ADP + phosphate + 2 H(+). It functions in the pathway pyrimidine metabolism; CTP biosynthesis via de novo pathway; CTP from UDP: step 2/2. Allosterically activated by GTP, when glutamine is the substrate; GTP has no effect on the reaction when ammonia is the substrate. The allosteric effector GTP functions by stabilizing the protein conformation that binds the tetrahedral intermediate(s) formed during glutamine hydrolysis. Inhibited by the product CTP, via allosteric rather than competitive inhibition. Catalyzes the ATP-dependent amination of UTP to CTP with either L-glutamine or ammonia as the source of nitrogen. Regulates intracellular CTP levels through interactions with the four ribonucleotide triphosphates. In Borreliella afzelii (strain PKo) (Borrelia afzelii), this protein is CTP synthase.